Here is a 467-residue protein sequence, read N- to C-terminus: Chromosomal replication initiator protein DnaA (467 aa).

The domain I, interacts with DnaA modulators stretch occupies residues 1–85; it reads MSLSLWQQCL…FEVGAKPASS (85 aa). The segment at 85–130 is domain II; it reads SLQKGAVSPAAAAIPAAQVQTARVAPTIVRPGWDNVPAPAEPTYRS. The interval 131–347 is domain III, AAA+ region; it reads NVNVKHTFDN…GALNRVIANA (217 aa). Residues Gly-175, Gly-177, Lys-178, and Thr-179 each coordinate ATP. Residues 348–467 form a domain IV, binds dsDNA region; sequence NFTGRAITID…FSNLIRTLSS (120 aa).

Belongs to the DnaA family. In terms of assembly, oligomerizes as a right-handed, spiral filament on DNA at oriC.

It is found in the cytoplasm. Plays an essential role in the initiation and regulation of chromosomal replication. ATP-DnaA binds to the origin of replication (oriC) to initiate formation of the DNA replication initiation complex once per cell cycle. Binds the DnaA box (a 9 base pair repeat at the origin) and separates the double-stranded (ds)DNA. Forms a right-handed helical filament on oriC DNA; dsDNA binds to the exterior of the filament while single-stranded (ss)DNA is stabiized in the filament's interior. The ATP-DnaA-oriC complex binds and stabilizes one strand of the AT-rich DNA unwinding element (DUE), permitting loading of DNA polymerase. After initiation quickly degrades to an ADP-DnaA complex that is not apt for DNA replication. Binds acidic phospholipids. This chain is Chromosomal replication initiator protein DnaA, found in Klebsiella pneumoniae (strain 342).